Consider the following 154-residue polypeptide: uncharacterized protein (154 aa).

Residues His-47, His-127, and His-131 each contribute to the a divalent metal cation site. Tyr-150 carries the phosphotyrosine modification.

It belongs to the DinB family. As to quaternary structure, homodimer.

This is an uncharacterized protein from Bacillus subtilis (strain 168).